A 237-amino-acid polypeptide reads, in one-letter code: Methylthioribulose-1-phosphate dehydratase (237 aa).

Position 97 (Cys97) interacts with substrate. Zn(2+) is bound by residues His114 and His116. Catalysis depends on Glu143, which acts as the Proton donor/acceptor. Residue His199 participates in Zn(2+) binding.

It belongs to the aldolase class II family. MtnB subfamily. Zn(2+) is required as a cofactor.

The protein resides in the cytoplasm. It catalyses the reaction 5-(methylsulfanyl)-D-ribulose 1-phosphate = 5-methylsulfanyl-2,3-dioxopentyl phosphate + H2O. The protein operates within amino-acid biosynthesis; L-methionine biosynthesis via salvage pathway; L-methionine from S-methyl-5-thio-alpha-D-ribose 1-phosphate: step 2/6. Functionally, catalyzes the dehydration of methylthioribulose-1-phosphate (MTRu-1-P) into 2,3-diketo-5-methylthiopentyl-1-phosphate (DK-MTP-1-P). The sequence is that of Methylthioribulose-1-phosphate dehydratase from Coccidioides posadasii (strain C735) (Valley fever fungus).